The chain runs to 184 residues: Tumor necrosis factor alpha-induced protein 8-like protein 2 (184 aa).

Ser-3 carries the post-translational modification Phosphoserine.

It belongs to the TNFAIP8 family. TNFAIP8L2 subfamily. May interact with CASP8; however, such result is unclear since could not reproduce the interaction with CASP8. Interacts with RAC1. Post-translationally, phosphorylated by TAK1/MAP3K7; this phosphorylation triggers association with BTRC and subsequent ubiquitination and degradation. In terms of processing, ubiquitinated in a BTRC-depdent manner; leading to degradation mediated through the proteasome pathway. In terms of tissue distribution, expressed in thymus, spleen, lymph node and small intestine, but not in liver, heart, muscle, testis, spinal cord or brain. Up-regulated in the spinal cord of mice with experimental autoimmune encephalomyelitis. Constitutively expressed by macrophages, B and T-lymphocytes at various developmental stages.

It localises to the cytoplasm. The protein localises to the nucleus. Its subcellular location is the lysosome. In terms of biological role, acts as a negative regulator of innate and adaptive immunity by maintaining immune homeostasis. Plays a regulatory role in the Toll-like signaling pathway by determining the strength of LPS-induced signaling and gene expression. Inhibits TCR-mediated T-cell activation and negatively regulate T-cell function to prevent hyperresponsiveness. Also inhibits autolysosome formation via negatively modulating MTOR activation by interacting with RAC1 and promoting the disassociation of the RAC1-MTOR complex. Plays an essential role in NK-cell biology by acting as a checkpoint and displaying an expression pattern correlating with NK-cell maturation process and by negatively regulating NK-cell maturation and antitumor immunity. Mechanistically, suppresses IL-15-triggered mTOR activity in NK-cells. This is Tumor necrosis factor alpha-induced protein 8-like protein 2 (Tnfaip8l2) from Mus musculus (Mouse).